We begin with the raw amino-acid sequence, 358 residues long: Alanine racemase (358 aa).

The active-site Proton acceptor; specific for D-alanine is Lys-35. Lys-35 is modified (N6-(pyridoxal phosphate)lysine). Arg-130 is a substrate binding site. Tyr-255 serves as the catalytic Proton acceptor; specific for L-alanine. Residue Met-303 participates in substrate binding.

This sequence belongs to the alanine racemase family. Pyridoxal 5'-phosphate is required as a cofactor.

The enzyme catalyses L-alanine = D-alanine. The protein operates within amino-acid biosynthesis; D-alanine biosynthesis; D-alanine from L-alanine: step 1/1. In terms of biological role, catalyzes the interconversion of L-alanine and D-alanine. May also act on other amino acids. The polypeptide is Alanine racemase (alr) (Shewanella oneidensis (strain ATCC 700550 / JCM 31522 / CIP 106686 / LMG 19005 / NCIMB 14063 / MR-1)).